The primary structure comprises 190 residues: Thiamine biosynthesis protein X (190 aa).

Residues 1-22 (MSISRTVFGIAATAALSAALVA) form the signal peptide. Cys-23 is lipidated: N-palmitoyl cysteine. Cys-23 carries the S-diacylglycerol cysteine lipid modification. A disordered region spans residues 43–68 (SQNPTSASSTSTSSATTTSSAPVEED). Low complexity predominate over residues 47 to 63 (TSASSTSTSSATTTSSA).

It is found in the cell membrane. Its function is as follows. Is necessary for biosynthesis of the 4-methyl-5-(beta-hydroxyethyl)thiazol component from which thiamine is formed. This is Thiamine biosynthesis protein X (thiX) from Corynebacterium glutamicum (strain ATCC 13032 / DSM 20300 / JCM 1318 / BCRC 11384 / CCUG 27702 / LMG 3730 / NBRC 12168 / NCIMB 10025 / NRRL B-2784 / 534).